Consider the following 424-residue polypeptide: Kynureninase (424 aa).

Pyridoxal 5'-phosphate contacts are provided by residues L105, S106, 133–136 (FPTD), D218, H221, and Y243. N6-(pyridoxal phosphate)lysine is present on K244. Positions 274 and 302 each coordinate pyridoxal 5'-phosphate.

It belongs to the kynureninase family. In terms of assembly, homodimer. It depends on pyridoxal 5'-phosphate as a cofactor.

It catalyses the reaction L-kynurenine + H2O = anthranilate + L-alanine + H(+). The enzyme catalyses 3-hydroxy-L-kynurenine + H2O = 3-hydroxyanthranilate + L-alanine + H(+). Its pathway is amino-acid degradation; L-kynurenine degradation; L-alanine and anthranilate from L-kynurenine: step 1/1. The protein operates within cofactor biosynthesis; NAD(+) biosynthesis; quinolinate from L-kynurenine: step 2/3. Functionally, catalyzes the cleavage of L-kynurenine (L-Kyn) and L-3-hydroxykynurenine (L-3OHKyn) into anthranilic acid (AA) and 3-hydroxyanthranilic acid (3-OHAA), respectively. The sequence is that of Kynureninase from Stenotrophomonas maltophilia (strain K279a).